Here is a 613-residue protein sequence, read N- to C-terminus: Ribosome-associated molecular chaperone SSB1 (613 aa).

The interval 1-391 (MAEGVFQGAI…ILTGQSTSED (391 aa)) is nucleotide binding domain (NBD). ATP-binding positions include 16-18 (TTY), Lys73, 205-207 (GGT), 271-278 (ERAKRTLS), and Gly342. The interval 392–402 (TKDLLLLDVAP) is inter-domain linker. A substrate binding domain (SBD) region spans residues 403–613 (LSLGVGMQGD…RVVTKAMSSR (211 aa)). Residues 516-612 (SDEIEKMVNQ…KRVVTKAMSS (97 aa)) form a lid domain (SBDalpha) region. The short motif at 574–582 (IESALSDAL) is the Nuclear export signal element.

It belongs to the heat shock protein 70 family. Ssb-type Hsp70 subfamily. As to quaternary structure, binds to ribosomes. Binds close to the ribosomal tunnel exit via contacts with both ribosomal proteins and rRNA. Directly interacts with nascent polypeptides. This interaction is dependent on the ribosome-associated complex (RAC). Interacts with SSE1. Interacts with FES1.

The protein resides in the cytoplasm. The enzyme catalyses ATP + H2O = ADP + phosphate + H(+). In terms of biological role, ribosome-bound, Hsp70-type chaperone that assists in the cotranslational folding of newly synthesized proteins in the cytosol. Stimulates folding by interacting with nascent chains, binding to short, largely hydrophobic sequences exposed by unfolded proteins, thereby stabilizing longer, more slowly translated, and aggregation-prone nascent polypeptides and domains that cannot fold stably until fully synthesized. The Hsp70-protein substrate interaction depends on ATP-binding and on allosteric regulation between the NBD and the SBD. The ATP-bound state is characterized by a fast exchange rate of substrate (low affinity state), while in the ADP-bound state exchange is much slower (high affinity state). During the Hsp70 cycle, the chaperone switches between the ATP-bound state (open conformation) and the ADP-bound state (closed conformation) by major conformational rearrangements involving mainly the lid domain. Ssb cooperates with a specific Hsp40/Hsp70 co-chaperone termed the ribosome-associated complex (RAC), which stimulates the ATPase activity of the ribosome-associated pool of Ssbs and switches it to the high affinity substrate binding state. Hsp110 chaperone SSE1 and FES1 act as nucleotide exchange factors that cause substrate release. The chain is Ribosome-associated molecular chaperone SSB1 (SSB1) from Zygosaccharomyces rouxii (strain ATCC 2623 / CBS 732 / NBRC 1130 / NCYC 568 / NRRL Y-229).